Reading from the N-terminus, the 151-residue chain is Large-conductance mechanosensitive channel (151 aa).

The next 2 membrane-spanning stretches (helical) occupy residues 14–34 (VVDMAVGIIIGGAFGALVNSL) and 85–105 (GLFVNALIGFLIMAFAVFLLV).

The protein belongs to the MscL family. As to quaternary structure, homopentamer.

The protein localises to the cell inner membrane. In terms of biological role, channel that opens in response to stretch forces in the membrane lipid bilayer. May participate in the regulation of osmotic pressure changes within the cell. The sequence is that of Large-conductance mechanosensitive channel from Chlorobaculum tepidum (strain ATCC 49652 / DSM 12025 / NBRC 103806 / TLS) (Chlorobium tepidum).